A 349-amino-acid chain; its full sequence is Ferredoxin--NADP reductase 1 (349 aa).

Residues Glu36, Lys44, Tyr48, Val88, Leu123, Asp290, and Ser331 each contribute to the FAD site.

The protein belongs to the ferredoxin--NADP reductase type 2 family. In terms of assembly, homodimer. Requires FAD as cofactor.

The enzyme catalyses 2 reduced [2Fe-2S]-[ferredoxin] + NADP(+) + H(+) = 2 oxidized [2Fe-2S]-[ferredoxin] + NADPH. The chain is Ferredoxin--NADP reductase 1 from Bacillus cytotoxicus (strain DSM 22905 / CIP 110041 / 391-98 / NVH 391-98).